Reading from the N-terminus, the 169-residue chain is Styrene-oxide isomerase (169 aa).

4 helical membrane-spanning segments follow: residues 13–33 (GILMIFCTLLFGVGLWMHLVG), 61–81 (PALNGMMVIAVAFVLPSLGFA), 85–105 (PHLLGNIIILDGWANVGFYFF), and 129–149 (FLALAPAYLFGVLAMGALAVI).

The protein localises to the membrane. The catalysed reaction is styrene oxide = 2-phenylacetaldehyde. The protein operates within aromatic compound metabolism. In terms of biological role, epoxystyrene isomerase that catalyzes the second step in the aerobic styrene degradation pathway by converting epoxystyrene to phenylacetaldehyde. The sequence is that of Styrene-oxide isomerase (styC) from Pseudomonas fluorescens.